The following is a 941-amino-acid chain: Glycine dehydrogenase (decarboxylating) (941 aa).

Residue Lys-692 is modified to N6-(pyridoxal phosphate)lysine.

The protein belongs to the GcvP family. In terms of assembly, the glycine cleavage system is composed of four proteins: P, T, L and H. Pyridoxal 5'-phosphate serves as cofactor.

The enzyme catalyses N(6)-[(R)-lipoyl]-L-lysyl-[glycine-cleavage complex H protein] + glycine + H(+) = N(6)-[(R)-S(8)-aminomethyldihydrolipoyl]-L-lysyl-[glycine-cleavage complex H protein] + CO2. Functionally, the glycine cleavage system catalyzes the degradation of glycine. The P protein binds the alpha-amino group of glycine through its pyridoxal phosphate cofactor; CO(2) is released and the remaining methylamine moiety is then transferred to the lipoamide cofactor of the H protein. The sequence is that of Glycine dehydrogenase (decarboxylating) from Mycobacterium bovis (strain ATCC BAA-935 / AF2122/97).